Consider the following 146-residue polypeptide: Hemoglobin subunit beta (146 aa).

Val-1 bears the N-acetylvaline mark. Residues 2–146 (HLTGEEKAAV…VANALAHKYH (145 aa)) form the Globin domain. A Phosphothreonine modification is found at Thr-12. Ser-44 carries the phosphoserine modification. An N6-acetyllysine modification is found at Lys-59. A heme b-binding site is contributed by His-63. Lys-82 is subject to N6-acetyllysine. Heme b is bound at residue His-92. Position 93 is an S-nitrosocysteine (Cys-93). N6-acetyllysine is present on Lys-144.

It belongs to the globin family. As to quaternary structure, heterotetramer of two alpha chains and two beta chains. In terms of tissue distribution, red blood cells.

Its function is as follows. Involved in oxygen transport from the lung to the various peripheral tissues. The chain is Hemoglobin subunit beta (HBB) from Ailurus fulgens (Himalayan red panda).